We begin with the raw amino-acid sequence, 309 residues long: Beta-ketoacyl-[acyl-carrier-protein] synthase III (309 aa).

Residues cysteine 111 and histidine 236 contribute to the active site. Residues 237-241 (QANVR) are ACP-binding. Residue asparagine 266 is part of the active site.

Belongs to the thiolase-like superfamily. FabH family. Homodimer.

The protein resides in the cytoplasm. It carries out the reaction malonyl-[ACP] + acetyl-CoA + H(+) = 3-oxobutanoyl-[ACP] + CO2 + CoA. Its pathway is lipid metabolism; fatty acid biosynthesis. In terms of biological role, catalyzes the condensation reaction of fatty acid synthesis by the addition to an acyl acceptor of two carbons from malonyl-ACP. Catalyzes the first condensation reaction which initiates fatty acid synthesis and may therefore play a role in governing the total rate of fatty acid production. Possesses both acetoacetyl-ACP synthase and acetyl transacylase activities. Its substrate specificity determines the biosynthesis of branched-chain and/or straight-chain of fatty acids. This Aquifex aeolicus (strain VF5) protein is Beta-ketoacyl-[acyl-carrier-protein] synthase III.